The sequence spans 338 residues: Fructose-1,6-bisphosphatase class 1 (338 aa).

Glutamate 94, aspartate 116, leucine 118, and aspartate 119 together coordinate Mg(2+). Substrate contacts are provided by residues 119 to 122 (DGSS), asparagine 210, and lysine 276. A Mg(2+)-binding site is contributed by glutamate 282.

Belongs to the FBPase class 1 family. In terms of assembly, homotetramer. Mg(2+) is required as a cofactor.

Its subcellular location is the cytoplasm. It carries out the reaction beta-D-fructose 1,6-bisphosphate + H2O = beta-D-fructose 6-phosphate + phosphate. It participates in carbohydrate biosynthesis; gluconeogenesis. In Burkholderia mallei (strain NCTC 10247), this protein is Fructose-1,6-bisphosphatase class 1.